A 137-amino-acid chain; its full sequence is Large ribosomal subunit protein uL16 (137 aa).

Basic residues predominate over residues 1 to 17 (MLQPKRTKFRKQMKGRN). The segment at 1 to 22 (MLQPKRTKFRKQMKGRNRGLAQ) is disordered.

Belongs to the universal ribosomal protein uL16 family. Part of the 50S ribosomal subunit.

Functionally, binds 23S rRNA and is also seen to make contacts with the A and possibly P site tRNAs. This chain is Large ribosomal subunit protein uL16, found in Teredinibacter turnerae (strain ATCC 39867 / T7901).